Consider the following 267-residue polypeptide: Potassium channel regulatory protein (267 aa).

Residues 5–74 (ELVTLNVGGK…LRTQQLLLPT (70 aa)) enclose the BTB domain.

Can form homooligomers. Interacts with KCNA1 (via cytoplasmic N-terminal domain) and KCNA4.

The protein resides in the endoplasmic reticulum. Its function is as follows. Inhibits potassium fluxes in cells. May regulate Kv1 family channel proteins by retaining a fraction of channels in endomembranes. This is Potassium channel regulatory protein (KCNRG) from Bos taurus (Bovine).